Reading from the N-terminus, the 21-residue chain is Dahlein-5.5 (21 aa).

In terms of tissue distribution, expressed by the skin dorsal glands.

It is found in the secreted. Has no antimicrobial activity. Strongly inhibits the formation of NO by neuronal nitric oxide synthase at micromolar concentrations. The polypeptide is Dahlein-5.5 (Ranoidea dahlii (Dahl's aquatic frog)).